Reading from the N-terminus, the 380-residue chain is MDFEQLKQDVIAYSKTIGIDKIGFASASPFEELKQRLIQQQQLNYQSGFEEPDIEKRTNPQLLLPGAKSIIAIALAYPSKLKNAPLSKRGERRGIFCRASWGQDYHLVLRDRLQKLEAYLIEKLPDIEVKSMVDTGELSDRAVSERAGIGWSGKNCSIITPEFGSYVYLGEMITNVPFPPDKPIEDQCGGCTKCIDICPTGALIQGGQLDSKKCIAFLTQTKGFLPEEYRDKIGNRIYGCDTCQTVCPKNKGMDFHNHPEMEPDPELVKPLLTPLLTISNRDFKEKYGIMSGSWRGKKPLQRNAILALAHFKEASAIPDLIGVMKDDPRPVLRGTAAWALGKIGGDGVGEAIEKAMEREKDEEVLHEMNRGLELLAQKKE.

The active-site Proton donor is the Asp-134. A 4Fe-4S ferredoxin-type 1 domain is found at 178–208; the sequence is FPPDKPIEDQCGGCTKCIDICPTGALIQGGQ. The [4Fe-4S] cluster site is built by Cys-188, Cys-191, Cys-194, Cys-198, Cys-214, Cys-240, Cys-243, and Cys-247. Residues 226–258 form the 4Fe-4S ferredoxin-type 2 domain; it reads PEEYRDKIGNRIYGCDTCQTVCPKNKGMDFHNH.

It belongs to the QueG family. In terms of assembly, monomer. Cob(II)alamin serves as cofactor. [4Fe-4S] cluster is required as a cofactor.

It localises to the cytoplasm. It catalyses the reaction epoxyqueuosine(34) in tRNA + AH2 = queuosine(34) in tRNA + A + H2O. It functions in the pathway tRNA modification; tRNA-queuosine biosynthesis. Functionally, catalyzes the conversion of epoxyqueuosine (oQ) to queuosine (Q), which is a hypermodified base found in the wobble positions of tRNA(Asp), tRNA(Asn), tRNA(His) and tRNA(Tyr). This Bacillus cereus (strain ATCC 14579 / DSM 31 / CCUG 7414 / JCM 2152 / NBRC 15305 / NCIMB 9373 / NCTC 2599 / NRRL B-3711) protein is Epoxyqueuosine reductase.